An 882-amino-acid chain; its full sequence is Pyruvate dehydrogenase E1 component (882 aa).

As to quaternary structure, homodimer. Part of the PDH complex, consisting of multiple copies of pyruvate dehydrogenase (E1), dihydrolipoamide acetyltransferase (E2) and lipoamide dehydrogenase (E3). The cofactor is thiamine diphosphate.

The enzyme catalyses N(6)-[(R)-lipoyl]-L-lysyl-[protein] + pyruvate + H(+) = N(6)-[(R)-S(8)-acetyldihydrolipoyl]-L-lysyl-[protein] + CO2. In terms of biological role, component of the pyruvate dehydrogenase (PDH) complex, that catalyzes the overall conversion of pyruvate to acetyl-CoA and CO(2). This Pseudomonas aeruginosa (strain ATCC 15692 / DSM 22644 / CIP 104116 / JCM 14847 / LMG 12228 / 1C / PRS 101 / PAO1) protein is Pyruvate dehydrogenase E1 component (aceE).